Here is a 576-residue protein sequence, read N- to C-terminus: Putative diflavin flavoprotein A 1 (576 aa).

The segment at 48 to 240 (RNGTTYNSFL…LAIKTVATGH (193 aa)) is zinc metallo-hydrolase. Fe cation-binding residues include histidine 97, glutamate 99, aspartate 101, histidine 164, aspartate 183, and histidine 240. The Flavodoxin-like domain maps to 269-431 (VALFYAEDYG…DLEKALGRIS (163 aa)). Residues 432-576 (TGLYIITTKK…VHHRKVGNHY (145 aa)) are flavodoxin-reductase-like.

In the N-terminal section; belongs to the zinc metallo-hydrolase group 3 family. It in the C-terminal section; belongs to the flavodoxin reductase family. Fe cation serves as cofactor.

Functionally, mediates electron transfer from NADH to oxygen, reducing it to water. This modular protein has 3 redox cofactors, in other organisms the same activity requires 2 or 3 proteins. This is Putative diflavin flavoprotein A 1 (dfa1) from Nostoc sp. (strain PCC 7120 / SAG 25.82 / UTEX 2576).